A 253-amino-acid chain; its full sequence is Short-chain dehydrogenase/reductase ATR9 (253 aa).

The NADP(+) site is built by S15, S16, I18, S38, N39, R42, D65, and K129. Catalysis depends on S147, which acts as the Proton donor. An NADP(+)-binding site is contributed by T194.

Belongs to the short-chain dehydrogenases/reductases (SDR) family.

The protein operates within mycotoxin biosynthesis. Short-chain dehydrogenase/reductase; part of the core atranone cluster (CAC) which products are predicted to catalyze most or all steps of mycotoxin atranone synthesis, starting from geranylgeranyl pyrophosphate (GGPP). The initial cyclization of GGPP to dolabellane is probably performed by the terpene cyclase ATR13. The Baeyer-Villiger oxidation near the end of the atranone synthesis, which converts atranones D and E to atranones F and G is predicted to be catalyzed by the monooxygenase ATR8. Of the CAC's other predicted gene products, the reducing PKS ATR6 might synthesize a polyketide chain. This polyketide is probably transferred onto the atranone backbone by the polyketide transferase ATR5. Other predicted CAC products include 4 oxygenases (ATR2, ATR3, ATR4, and ATR14), 3 short-chain reductases (ATR7, ATR9, and ATR10), and a methyltransferase (ATR12). These may all be involved in the various steps of atranone biosynthesis, although their specific roles must await experimental determination. The sequence is that of Short-chain dehydrogenase/reductase ATR9 from Stachybotrys chlorohalonatus (strain IBT 40285).